We begin with the raw amino-acid sequence, 445 residues long: Tubulin beta-1 chain (445 aa).

GTP is bound by residues Gln-11, Glu-69, Ser-138, Gly-142, Thr-143, Gly-144, Asn-204, and Asn-226. A Mg(2+)-binding site is contributed by Glu-69. The interval 426–445 (QDATAEDEEEYEDEEEEMAA) is disordered. Residues 429–445 (TAEDEEEYEDEEEEMAA) show a composition bias toward acidic residues.

Belongs to the tubulin family. As to quaternary structure, dimer of alpha and beta chains. A typical microtubule is a hollow water-filled tube with an outer diameter of 25 nm and an inner diameter of 15 nM. Alpha-beta heterodimers associate head-to-tail to form protofilaments running lengthwise along the microtubule wall with the beta-tubulin subunit facing the microtubule plus end conferring a structural polarity. Microtubules usually have 13 protofilaments but different protofilament numbers can be found in some organisms and specialized cells. It depends on Mg(2+) as a cofactor.

It localises to the cytoplasm. The protein resides in the cytoskeleton. In terms of biological role, tubulin is the major constituent of microtubules, a cylinder consisting of laterally associated linear protofilaments composed of alpha- and beta-tubulin heterodimers. Microtubules grow by the addition of GTP-tubulin dimers to the microtubule end, where a stabilizing cap forms. Below the cap, tubulin dimers are in GDP-bound state, owing to GTPase activity of alpha-tubulin. This chain is Tubulin beta-1 chain (TUBB1), found in Eleusine indica (Goosegrass).